A 328-amino-acid chain; its full sequence is Phospholipid scramblase 1 (328 aa).

Residues 1–93 are proline-rich domain (PRD); the sequence is MENHSKQTEA…NHPGGPGGTP (93 aa). Residues 1-96 are disordered; the sequence is MENHSKQTEA…GGPGGTPWMP (96 aa). At 1-297 the chain is on the cytoplasmic side; the sequence is MENHSKQTEA…IQFPLDLDVK (297 aa). The short motif at 18–26 is the SH3-binding 1 element; that stretch reads PAGYPPPYP. The short motif at 22-25 is the PPxY motif element; it reads PPPY. Positions 28-47 are enriched in low complexity; it reads AAFQGPSDHAAYPIPQAGYQ. Positions 49–64 are enriched in pro residues; that stretch reads PPGPYPGPQPGYPVPP. The short motif at 56-64 is the SH3-binding 2 element; that stretch reads PQPGYPVPP. Y83 carries the phosphotyrosine; by ABL modification. The SH3-binding 3 motif lies at 93 to 101; the sequence is PWMPAPPPP. The residue at position 170 (T170) is a Phosphothreonine; by PKC/PRKCD. S-palmitoyl cysteine attachment occurs at residues C193, C194, C197, and C198. The Nuclear localization signal motif lies at 269–275; that stretch reads SKQWSGF. A helical membrane pass occupies residues 298–314; sequence MKAVMLGACFLIDFMFF. Residues 315 to 328 lie on the Extracellular side of the membrane; that stretch reads ERTGNEEQRSGAWQ.

It belongs to the phospholipid scramblase family. Forms homooligomers in the presence of calcium. Interacts with ABL. Interacts with RELT, RELL1 and RELL2. Interacts with OXSR1 in the presence of RELT. Interacts with OCLN, TOP2A and TOP2B. Interacts with TRPC1, TRPC4 and TRPC5. Interacts with ILDR1. Ca(2+) is required as a cofactor. Requires Mg(2+) as cofactor. The cofactor is Zn(2+). In terms of processing, phosphorylation at Thr-170 by PKC/PKCD increases its phospholipid scramblase activity during both cell stimulation and apoptosis. Phosphorylated by OXSR1 in the presence of RELT. Palmitoylation is required for its phospholipid scramblase activity. Palmitoylation regulates its localization to the cell membrane or the nucleus; trafficking to the cell membrane is dependent upon palmitoylation whereas in the absence of palmitoylation, localizes to the nucleus. In terms of tissue distribution, highly expressed in kidney, lung, liver and bone marrow, slightly in spleen, heart and macrophage.

Its subcellular location is the cell membrane. It is found in the nucleus. The protein resides in the cytoplasm. It localises to the perinuclear region. It carries out the reaction a 1,2-diacyl-sn-glycero-3-phosphocholine(in) = a 1,2-diacyl-sn-glycero-3-phosphocholine(out). The catalysed reaction is a 1,2-diacyl-sn-glycero-3-phosphoethanolamine(in) = a 1,2-diacyl-sn-glycero-3-phosphoethanolamine(out). The enzyme catalyses a 1,2-diacyl-sn-glycero-3-phospho-L-serine(in) = a 1,2-diacyl-sn-glycero-3-phospho-L-serine(out). Its function is as follows. Catalyzes calcium-induced ATP-independent rapid bidirectional and non-specific distribution of phospholipids (lipid scrambling or lipid flip-flop) between the inner and outer leaflet of the plasma membrane resulting in collapse of the phospholipid asymmetry which leads to phosphatidylserine externalization on the cell surface. Mediates calcium-dependent phosphatidylserine externalization and apoptosis in neurons via its association with TRPC5. Also exhibits magnesium-dependent nuclease activity against double-stranded DNA and RNA but not single-stranded DNA and can enhance DNA decatenation mediated by TOP2A. Negatively regulates FcR-mediated phagocytosis in differentiated macrophages. May contribute to cytokine-regulated cell proliferation and differentiation. The protein is Phospholipid scramblase 1 (Plscr1) of Mus musculus (Mouse).